We begin with the raw amino-acid sequence, 479 residues long: Bifunctional AAC/APH (479 aa).

In terms of domain architecture, N-acetyltransferase spans 8 to 180 (ICIRTLIDDD…DCYLMEYRYD (173 aa)). The tract at residues 110–153 (KGIGTRYIKLIFEFLKKERNANAVILDPHKNNPRAIRAYQKSGF) is acetyl-CoA binding site. Catalysis depends on Asp374, which acts as the Proton acceptor; for phosphotransferase activity. Residue Asp393 coordinates a gentamycin.

In the C-terminal section; belongs to the aminoglycoside phosphotransferase family.

It localises to the cytoplasm. It carries out the reaction a gentamycin + GTP = a gentamycin 2''-phosphate + GDP + H(+). Involved in resistance to gentamicin, tobramycin, and kanamycin. Tobramycin and kanamycin resistance is due to the ACC activity, specified by N-terminal region. The C-terminal region is a kinase that phosphorylates several 4,6-disubstituted aminoglycosides. The sequence is that of Bifunctional AAC/APH (aacA-aphD) from Enterococcus faecalis (strain ATCC 700802 / V583).